The chain runs to 72 residues: UPF0154 protein YneF (72 aa).

A helical transmembrane segment spans residues 4 to 24 (WVGILVGVVALLIGVALGFFI).

The protein belongs to the UPF0154 family.

It localises to the membrane. This is UPF0154 protein YneF (yneF) from Bacillus subtilis (strain 168).